A 172-amino-acid polypeptide reads, in one-letter code: Large ribosomal subunit protein uL10 (172 aa).

This sequence belongs to the universal ribosomal protein uL10 family. Part of the ribosomal stalk of the 50S ribosomal subunit. The N-terminus interacts with L11 and the large rRNA to form the base of the stalk. The C-terminus forms an elongated spine to which L12 dimers bind in a sequential fashion forming a multimeric L10(L12)X complex.

Its function is as follows. Forms part of the ribosomal stalk, playing a central role in the interaction of the ribosome with GTP-bound translation factors. This Nitrobacter winogradskyi (strain ATCC 25391 / DSM 10237 / CIP 104748 / NCIMB 11846 / Nb-255) protein is Large ribosomal subunit protein uL10.